Consider the following 476-residue polypeptide: Serine carboxypeptidase 2 (476 aa).

The signal sequence occupies residues 1–34; that stretch reads MRTTTRRLPPAPAAAAVLLAALTCLLLRPAAVAA. 3 cysteine pairs are disulfide-bonded: Cys-97-Cys-353, Cys-254-Cys-266, and Cys-290-Cys-320. Asn-148 and Asn-159 each carry an N-linked (GlcNAc...) asparagine glycan. Ser-190 is a catalytic residue. Asn-291 carries an N-linked (GlcNAc...) asparagine glycan. Positions 295–313 are cleaved as a propeptide — linker peptide; that stretch reads SSSSSSLSRRRTRGRYPWL. Thr-314 is subject to Blocked amino end (Thr). Residues Asn-341 and Asn-347 are each glycosylated (N-linked (GlcNAc...) asparagine). Asn-352 carries N-linked (GlcNAc...) asparagine; partial glycosylation. O-linked (GalNAc...) threonine; in variant 351-AT-352 glycosylation is present at Asn-352. Active-site residues include Asp-390 and His-443. Residue Asn-472 is glycosylated (N-linked (GlcNAc...) asparagine).

The protein belongs to the peptidase S10 family. Carboxypeptidase II is a dimer, where each monomer is composed of two chains linked by a disulfide bond.

Its subcellular location is the secreted. It carries out the reaction Preferential release of a C-terminal arginine or lysine residue.. May be involved in the degradation of small peptides (2-5 residues) or in the degradation of storage proteins in the embryo. The chain is Serine carboxypeptidase 2 (CBP2) from Hordeum vulgare (Barley).